The chain runs to 90 residues: Small ribosomal subunit protein bS18 (90 aa).

It belongs to the bacterial ribosomal protein bS18 family. As to quaternary structure, part of the 30S ribosomal subunit. Forms a tight heterodimer with protein bS6.

Its function is as follows. Binds as a heterodimer with protein bS6 to the central domain of the 16S rRNA, where it helps stabilize the platform of the 30S subunit. This is Small ribosomal subunit protein bS18 from Bordetella bronchiseptica (strain ATCC BAA-588 / NCTC 13252 / RB50) (Alcaligenes bronchisepticus).